A 157-amino-acid chain; its full sequence is MAKSKNHTTHNQSRKWHRNGIKKPRSQRYESLKGVDPKFLRNMRFAKKHNKKGLRKMQTNNAKAMSARAEAVKALVKPKEVKPKIPKGVSRKLDRLAYIAHPKLGKRARARIAKGLRLCRPKAKAKAKDQTKAQAAAPASIPAQAPKGAQATTKATE.

Residues 1–26 (MAKSKNHTTHNQSRKWHRNGIKKPRS) show a composition bias toward basic residues. Residues 1 to 32 (MAKSKNHTTHNQSRKWHRNGIKKPRSQRYESL) are disordered. Lys-5 bears the N6-methyllysine mark. Ser-31 carries the post-translational modification Phosphoserine. N6-acetyllysine is present on Lys-33. A disordered region spans residues 121-157 (PKAKAKAKDQTKAQAAAPASIPAQAPKGAQATTKATE). Positions 132-147 (KAQAAAPASIPAQAPK) are enriched in low complexity. Phosphoserine is present on Ser-140.

This sequence belongs to the eukaryotic ribosomal protein eL29 family. In terms of assembly, component of the large ribosomal subunit.

The protein resides in the cytoplasm. Component of the large ribosomal subunit. The ribosome is a large ribonucleoprotein complex responsible for the synthesis of proteins in the cell. The polypeptide is Large ribosomal subunit protein eL29 (RPL29) (Macaca fascicularis (Crab-eating macaque)).